The sequence spans 276 residues: NADPH-dependent 7-cyano-7-deazaguanine reductase (276 aa).

83–85 contacts substrate; the sequence is IES. 85 to 86 lines the NADPH pocket; it reads SK. C184 serves as the catalytic Thioimide intermediate. D191 acts as the Proton donor in catalysis. 223–224 serves as a coordination point for substrate; sequence HE. 252 to 253 provides a ligand contact to NADPH; that stretch reads RG.

The protein belongs to the GTP cyclohydrolase I family. QueF type 2 subfamily. Homodimer.

It is found in the cytoplasm. It catalyses the reaction 7-aminomethyl-7-carbaguanine + 2 NADP(+) = 7-cyano-7-deazaguanine + 2 NADPH + 3 H(+). The protein operates within tRNA modification; tRNA-queuosine biosynthesis. Catalyzes the NADPH-dependent reduction of 7-cyano-7-deazaguanine (preQ0) to 7-aminomethyl-7-deazaguanine (preQ1). The chain is NADPH-dependent 7-cyano-7-deazaguanine reductase from Ectopseudomonas mendocina (strain ymp) (Pseudomonas mendocina).